We begin with the raw amino-acid sequence, 203 residues long: Microtubule-associated protein Jupiter (203 aa).

The residue at position 30 (S30) is a Phosphoserine. 2 positions are modified to phosphothreonine: T41 and T102. Polar residues predominate over residues 123–132 (LISKGNYNGK). 2 disordered regions span residues 123-163 (LISK…GNPV) and 182-203 (NGGSQVINKNRVPPGGYSSGLW). The span at 133 to 146 (SGSVSSASSSVSSS) shows a compositional bias: low complexity. Phosphoserine occurs at positions 135 and 146.

The protein belongs to the MAP Jupiter family.

It is found in the nucleus. The protein resides in the cytoplasm. The protein localises to the cytoskeleton. Its subcellular location is the spindle. Functionally, binds to all microtubule populations. The polypeptide is Microtubule-associated protein Jupiter (Drosophila mojavensis (Fruit fly)).